Here is a 566-residue protein sequence, read N- to C-terminus: Bicarbonate transporter BicA (566 aa).

Topologically, residues 1-15 (MQITNKIHFRNIRGD) are cytoplasmic. The chain crosses the membrane as a helical span at residues 16 to 36 (IFGGLTAAVIALPMALAFGVA). At 37–42 (SGAGAE) the chain is on the periplasmic side. The chain crosses the membrane as a helical span at residues 43-63 (AGLWGAVLVGFFAALFGGTPT). A topological domain (cytoplasmic) is located at residue leucine 64. The chain crosses the membrane as a helical span at residues 65 to 85 (ISEPTGPMTVVMTAVIAHFTA). Threonine 69 provides a ligand contact to hydrogencarbonate. The Periplasmic portion of the chain corresponds to 86–93 (SAATPEEG). A helical membrane pass occupies residues 94–114 (LAIAFTVVMMAGVFQIIFGSL). Residues 115-126 (KLGKYVTMMPYT) lie on the Cytoplasmic side of the membrane. The chain crosses the membrane as a helical span at residues 127-147 (VISGFMSGIGIILVILQLAPF). The Periplasmic portion of the chain corresponds to 148–169 (LGQASPGGGVIGTLQNLPTLLS). A helical transmembrane segment spans residues 170 to 190 (NIQPGETALALGTVAIIWFMP). Residues 191–196 (EKFKKV) are Cytoplasmic-facing. Residues 197 to 217 (IPPQLVALVLGTVIAFFVFPP) form a helical membrane-spanning segment. The Periplasmic segment spans residues 218 to 247 (EVSDLRRIGEIRAGFPELVRPSFSPVEFQR). Residues 248–268 (MILDAAVLGMLGCIDALLTSV) form a helical membrane-spanning segment. Na(+) contacts are provided by aspartate 262, threonine 266, and glycine 304. The Cytoplasmic segment spans residues 269 to 318 (VADSLTRTEHNSNKELIGQGLGNLFSGLFGGIAGAGATMGTVVNIQSGGR). Hydrogencarbonate is bound at residue alanine 305. Threonine 306 is a binding site for Na(+). The chain crosses the membrane as a helical span at residues 319–339 (TALSGLVRAFVLLVVILGAAS). A topological domain (periplasmic) is located at residue leucine 340. A helical transmembrane segment spans residues 341 to 361 (TATIPLAVLAGIAFKVGVDII). The Cytoplasmic segment spans residues 362 to 371 (DWSFLKRAHE). The helical transmembrane segment at 372–392 (ISPKGALIMYGVILLTVLVDL) threads the bilayer. A topological domain (periplasmic) is located at residue isoleucine 393. A helical transmembrane segment spans residues 394–414 (VAVGVGVFVANVLTIERMSNL). Residues 415 to 566 (QSEKVQTVSD…GVTAPSSEMG (152 aa)) lie on the Cytoplasmic side of the membrane. An STAS domain is found at 436 to 546 (KRWLDEGQGR…MSREEALKNA (111 aa)).

The protein belongs to the SLC26A/SulP transporter (TC 2.A.53) family.

Its subcellular location is the cell inner membrane. Functionally, low/medium affinity, Na(+)-dependent bicarbonate transporter. The sequence is that of Bicarbonate transporter BicA (bicA) from Picosynechococcus sp. (strain ATCC 27264 / PCC 7002 / PR-6) (Agmenellum quadruplicatum).